The primary structure comprises 456 residues: Alcohol acyltransferase 1 (456 aa).

Active-site proton acceptor residues include histidine 166 and aspartate 382.

It belongs to the plant acyltransferase family.

Its function is as follows. Involved in the biosynthesis of volatile esters which confer kiwifruit flavor. Alcohol acyl transferase that can use a wide range of alcohols as substrate to produce esters. The polypeptide is Alcohol acyltransferase 1 (Actinidia chinensis var. chinensis (Chinese soft-hair kiwi)).